A 407-amino-acid polypeptide reads, in one-letter code: Probable tRNA sulfurtransferase (407 aa).

The region spanning 61-165 is the THUMP domain; that stretch reads EEMCNRLKKV…LDAIYMYDQV (105 aa). ATP contacts are provided by residues 183–184, 208–209, R265, G287, and Q296; these read ML and HF.

It belongs to the ThiI family.

Its subcellular location is the cytoplasm. It carries out the reaction [ThiI sulfur-carrier protein]-S-sulfanyl-L-cysteine + a uridine in tRNA + 2 reduced [2Fe-2S]-[ferredoxin] + ATP + H(+) = [ThiI sulfur-carrier protein]-L-cysteine + a 4-thiouridine in tRNA + 2 oxidized [2Fe-2S]-[ferredoxin] + AMP + diphosphate. The enzyme catalyses [ThiS sulfur-carrier protein]-C-terminal Gly-Gly-AMP + S-sulfanyl-L-cysteinyl-[cysteine desulfurase] + AH2 = [ThiS sulfur-carrier protein]-C-terminal-Gly-aminoethanethioate + L-cysteinyl-[cysteine desulfurase] + A + AMP + 2 H(+). It participates in cofactor biosynthesis; thiamine diphosphate biosynthesis. Catalyzes the ATP-dependent transfer of a sulfur to tRNA to produce 4-thiouridine in position 8 of tRNAs, which functions as a near-UV photosensor. Also catalyzes the transfer of sulfur to the sulfur carrier protein ThiS, forming ThiS-thiocarboxylate. This is a step in the synthesis of thiazole, in the thiamine biosynthesis pathway. The sulfur is donated as persulfide by IscS. The sequence is that of Probable tRNA sulfurtransferase from Staphylococcus saprophyticus subsp. saprophyticus (strain ATCC 15305 / DSM 20229 / NCIMB 8711 / NCTC 7292 / S-41).